Consider the following 469-residue polypeptide: Programmed cell death protein 4 (469 aa).

Position 1 is an N-acetylmethionine (M1). Disordered stretches follow at residues 1–30 (MDVENEQILNVNPTDPDNLSDSLFSGDEEN) and 58–128 (KAKR…GTPG). Polar residues predominate over residues 7–23 (QILNVNPTDPDNLSDSL). S25 carries the post-translational modification Phosphoserine. Residues 58–64 (KAKRRLR) carry the Nuclear localization signal motif. Residue S67 is modified to Phosphoserine; by PKB and RPS6KB1. Residues S68, S71, S76, S78, and S94 each carry the phosphoserine modification. The Phosphodegron signature appears at 70–76 (DSGRGDS). The segment covering 114–125 (KKGGAGGKGVWG) has biased composition (gly residues). Residue Y152 is modified to Phosphotyrosine. Residues 163–284 (AFEKTLTPII…CNTYIDSYKG (122 aa)) enclose the MI 1 domain. 2 positions are modified to phosphoserine: S313 and S317. The MI 2 domain occupies 326–449 (HLVKEIDMLL…SKQLRDLCPS (124 aa)). Positions 448–454 (PSRGRKR) match the Nuclear localization signal motif. S457 is subject to Phosphoserine.

This sequence belongs to the PDCD4 family. In terms of assembly, interacts (via MI domains) with EIF4A2. Interacts (via MI domains) with EIF4A1 (via N-terminal domain). Heterotrimer with EIF4A1; one molecule of PDCD4 binds two molecules of EIF4A1. Interacts with EIF4G1. May form a complex with EIF4A1 and EIF4G1. The interaction between PDCD4 and EIF4A1 interferes with the interaction between EIF4A1 and EIF4G. When phosphorylated, interacts with BTRC and FBXW11. Post-translationally, polyubiquitinated, leading to its proteasomal degradation. Rapidly degraded in response to mitogens. Phosphorylation of the phosphodegron promotes interaction with BTRC and proteasomal degradation. Phosphorylated at Ser-67 by RPS6KB1 in response to mitogens; phosphorylation promotes proteasomal degradation of PDCD4.

Its subcellular location is the nucleus. It localises to the cytoplasm. Inhibits translation initiation and cap-dependent translation. May excert its function by hindering the interaction between EIF4A1 and EIF4G. Inhibits the helicase activity of EIF4A. Modulates the activation of JUN kinase. Down-regulates the expression of MAP4K1, thus inhibiting events important in driving invasion, namely, MAPK85 activation and consequent JUN-dependent transcription. May play a role in apoptosis. Tumor suppressor. Inhibits tumor promoter-induced neoplastic transformation. Binds RNA. The chain is Programmed cell death protein 4 (Pdcd4) from Rattus norvegicus (Rat).